A 326-amino-acid polypeptide reads, in one-letter code: H-2 class I histocompatibility antigen, Q8 alpha chain (326 aa).

The signal sequence occupies residues 1–21; that stretch reads MALTMLLLLVAAALTLIETRA. Positions 22 to 111 are alpha-1; it reads GPHSLRYFHT…AQRYYNQSKG (90 aa). Residues 22-305 lie on the Extracellular side of the membrane; sequence GPHSLRYFHT…EPPPSTVSNM (284 aa). A glycan (N-linked (GlcNAc...) asparagine) is linked at Asn-107. The tract at residues 112-203 is alpha-2; the sequence is GSHTLQWMYG…QLRKETLLCT (92 aa). Intrachain disulfides connect Cys-122-Cys-185 and Cys-224-Cys-280. The tract at residues 204–295 is alpha-3; that stretch reads DPPKAHVTHH…GLPEPLTLRW (92 aa). An Ig-like C1-type domain is found at 206-294; it reads PKAHVTHHPR…EGLPEPLTLR (89 aa). N-linked (GlcNAc...) asparagine glycosylation is present at Asn-277. The tract at residues 296 to 305 is connecting peptide; the sequence is EPPPSTVSNM. The chain crosses the membrane as a helical span at residues 306–326; that stretch reads ANVAILVVLVAWPSLELWWIL.

The protein belongs to the MHC class I family. In terms of assembly, heterodimer of an alpha chain and a beta chain (beta-2-microglobulin).

The protein resides in the membrane. Involved in the presentation of foreign antigens to the immune system. The chain is H-2 class I histocompatibility antigen, Q8 alpha chain (H2-Q8) from Mus musculus (Mouse).